The sequence spans 340 residues: ATP synthase subunit a (340 aa).

Residues 1–32 (MKRVNVIQAKAFLKVIALLVPLLLNANGPAFA) form the signal peptide. 6 helical membrane passes run 107-127 (HVVM…LVGS), 172-192 (LLTV…PYGA), 197-217 (NINV…VAAL), 236-256 (ALWI…PVAL), 269-289 (IVIL…VAVV), and 296-316 (IFIY…FTML).

Belongs to the ATPase A chain family. F-type ATPases have 2 components, CF(1) - the catalytic core - and CF(0) - the membrane proton channel. CF(1) has five subunits: alpha(3), beta(3), gamma(1), delta(1), epsilon(1). CF(0) has four main subunits: a, b, b' and c.

Its subcellular location is the cell inner membrane. Functionally, key component of the proton channel; it plays a direct role in the translocation of protons across the membrane. In Pelodictyon phaeoclathratiforme (strain DSM 5477 / BU-1), this protein is ATP synthase subunit a.